A 226-amino-acid chain; its full sequence is Transcriptional regulatory protein CitT (226 aa).

A Response regulatory domain is found at 3–119 (HIAIAEDDFR…KFRQVLLQYK (117 aa)). Aspartate 54 bears the 4-aspartylphosphate mark. Positions 178–197 (AEELGEKMGASRTTARRYAE) form a DNA-binding region, H-T-H motif.

In terms of processing, phosphorylated by CitS.

The protein resides in the cytoplasm. Its function is as follows. Member of the two-component regulatory system CitT/CitS. Regulates the expression of the citM-yflN operon. Phosphorylated CitT binds to the citM promoter to activate the transcription of the citM-yflN operon. The protein is Transcriptional regulatory protein CitT (citT) of Bacillus subtilis (strain 168).